The primary structure comprises 427 residues: Alpha/beta hydrolase gkaG (427 aa).

Asp368 is an active-site residue.

It belongs to the AB hydrolase superfamily. Homodimer.

It functions in the pathway mycotoxin biosynthesis. In terms of biological role, alpha/beta hydrolase; part of the gene cluster that mediates the biosynthesis of GKK1032, fungal natural products containing a macrocyclic para-cyclophane connected to a decahydrofluorene ring system that show potent antitumor activities. Within the pathway, gkaG catalyzes the Knoevenagel condensation that affords the 3-pyrrolin-2-one ring, using as substrate the polyketide-tyrosyl acyl thioester product of gkaA. The pathway begins with the PKS-NRPS gkaA which, with the help of the trans-enoyl reductase gkaC, synthesizes the polyketide-tyrosyl acyl thioester product which can be reductively off-loaded by the terminal reductase (R) domain in gkaA. The alpha/beta hydrolase gkaG is then required to catalyze the subsequent Knoevenagel condensation that affords the 3-pyrrolin-2-one ring, whereas the three proteins gkaB, gkaX and gkaZ then function synergistically to form the cyclophane. The polypeptide is Alpha/beta hydrolase gkaG (Penicillium citrinum).